The chain runs to 380 residues: Sterol 24-C-methyltransferase ERG6B (380 aa).

The protein belongs to the class I-like SAM-binding methyltransferase superfamily. Erg6/SMT family.

The catalysed reaction is lanosterol + S-adenosyl-L-methionine = eburicol + S-adenosyl-L-homocysteine + H(+). It participates in steroid metabolism; ergosterol biosynthesis. Functionally, sterol 24-C-methyltransferase; part of the third module of ergosterol biosynthesis pathway that includes the late steps of the pathway. ERG6A and ERG6B methylate lanosterol at C-24 to produce eburicol. The third module or late pathway involves the ergosterol synthesis itself through consecutive reactions that mainly occur in the endoplasmic reticulum (ER) membrane. Firstly, the squalene synthase ERG9 catalyzes the condensation of 2 farnesyl pyrophosphate moieties to form squalene, which is the precursor of all steroids. Squalene synthase is crucial for balancing the incorporation of farnesyl diphosphate (FPP) into sterol and nonsterol isoprene synthesis. Secondly, squalene is converted into lanosterol by the consecutive action of the squalene epoxidase ERG1 and the lanosterol synthase ERG7. Then, the delta(24)-sterol C-methyltransferase ERG6 methylates lanosterol at C-24 to produce eburicol. Eburicol is the substrate of the sterol 14-alpha demethylase encoded by CYP51A, CYP51B and CYP51C, to yield 4,4,24-trimethyl ergosta-8,14,24(28)-trienol. CYP51B encodes the enzyme primarily responsible for sterol 14-alpha-demethylation, and plays an essential role in ascospore formation. CYP51A encodes an additional sterol 14-alpha-demethylase, induced on ergosterol depletion and responsible for the intrinsic variation in azole sensitivity. The third CYP51 isoform, CYP51C, does not encode a sterol 14-alpha-demethylase, but is required for full virulence on host wheat ears. The C-14 reductase ERG24 then reduces the C14=C15 double bond which leads to 4,4-dimethylfecosterol. A sequence of further demethylations at C-4, involving the C-4 demethylation complex containing the C-4 methylsterol oxidases ERG25, the sterol-4-alpha-carboxylate 3-dehydrogenase ERG26 and the 3-keto-steroid reductase ERG27, leads to the production of fecosterol via 4-methylfecosterol. ERG28 has a role as a scaffold to help anchor ERG25, ERG26 and ERG27 to the endoplasmic reticulum. The C-8 sterol isomerase ERG2 then catalyzes the reaction which results in unsaturation at C-7 in the B ring of sterols and thus converts fecosterol to episterol. The sterol-C5-desaturases ERG3A and ERG3BB then catalyze the introduction of a C-5 double bond in the B ring to produce 5-dehydroepisterol. The C-22 sterol desaturases ERG5A and ERG5B further convert 5-dehydroepisterol into ergosta-5,7,22,24(28)-tetraen-3beta-ol by forming the C-22(23) double bond in the sterol side chain. Finally, ergosta-5,7,22,24(28)-tetraen-3beta-ol is substrate of the C-24(28) sterol reductase ERG4 to produce ergosterol. This is Sterol 24-C-methyltransferase ERG6B from Gibberella zeae (strain ATCC MYA-4620 / CBS 123657 / FGSC 9075 / NRRL 31084 / PH-1) (Wheat head blight fungus).